A 553-amino-acid polypeptide reads, in one-letter code: CTP synthase (553 aa).

The interval 1–270 (MTKYVFVTGG…DDLICRELEL (270 aa)) is amidoligase domain. Residue serine 13 coordinates CTP. Serine 13 contributes to the UTP binding site. Residues 14 to 19 (SLGKGI) and aspartate 71 each bind ATP. Aspartate 71 and glutamate 144 together coordinate Mg(2+). CTP-binding positions include 151–153 (DIE), 191–196 (KTKPTQ), and lysine 227. UTP contacts are provided by residues 191–196 (KTKPTQ) and lysine 227. The Glutamine amidotransferase type-1 domain occupies 295–547 (TIGMVGKYVE…IKAALIHQDA (253 aa)). L-glutamine is bound at residue glycine 356. Residue cysteine 383 is the Nucleophile; for glutamine hydrolysis of the active site. L-glutamine-binding positions include 384 to 387 (LGMQ), glutamate 407, and arginine 473. Residues histidine 520 and glutamate 522 contribute to the active site.

It belongs to the CTP synthase family. Homotetramer.

The catalysed reaction is UTP + L-glutamine + ATP + H2O = CTP + L-glutamate + ADP + phosphate + 2 H(+). It carries out the reaction L-glutamine + H2O = L-glutamate + NH4(+). It catalyses the reaction UTP + NH4(+) + ATP = CTP + ADP + phosphate + 2 H(+). It participates in pyrimidine metabolism; CTP biosynthesis via de novo pathway; CTP from UDP: step 2/2. Its activity is regulated as follows. Allosterically activated by GTP, when glutamine is the substrate; GTP has no effect on the reaction when ammonia is the substrate. The allosteric effector GTP functions by stabilizing the protein conformation that binds the tetrahedral intermediate(s) formed during glutamine hydrolysis. Inhibited by the product CTP, via allosteric rather than competitive inhibition. Its function is as follows. Catalyzes the ATP-dependent amination of UTP to CTP with either L-glutamine or ammonia as the source of nitrogen. Regulates intracellular CTP levels through interactions with the four ribonucleotide triphosphates. The sequence is that of CTP synthase from Polynucleobacter asymbioticus (strain DSM 18221 / CIP 109841 / QLW-P1DMWA-1) (Polynucleobacter necessarius subsp. asymbioticus).